The following is a 396-amino-acid chain: MKEKLTNNTFQVNEKGYYGKFGGAFIPEILHENINRLQKAYKSIIESQEFIEQYYKLLHDYAGRPSPLYFAKRLSDKHKCRIYIKREDLNHTGSHKINNTLGQILLSRKMGKTRIIAETGAGQHGVASATVCALMDMKCVVYMGKTDINRQNLNVRKMEMLGATVIPVTSGNMTLKDATNEAIRDWCSNPDDTHYIIGSTVGPHPYPDMVARFQSIISKEIKSQLPEKENRNYPDYLIACIGGGSNAAGTIYEYLYDNRVKIILAEAAGQGIHSGHSAATIHLGKIGIIHGSKTLIMQTSDGQIEEPYSISAGLDYPGIGPMHAHIAKQGRSEILAIDDNEALSAAMELTRLEGIIPALESAHALGIFQKKQFKTNDVIVVCLSGRGDKDMETYYK.

Residue K96 is modified to N6-(pyridoxal phosphate)lysine.

The protein belongs to the TrpB family. As to quaternary structure, tetramer of two alpha and two beta chains. Pyridoxal 5'-phosphate is required as a cofactor.

It catalyses the reaction (1S,2R)-1-C-(indol-3-yl)glycerol 3-phosphate + L-serine = D-glyceraldehyde 3-phosphate + L-tryptophan + H2O. Its pathway is amino-acid biosynthesis; L-tryptophan biosynthesis; L-tryptophan from chorismate: step 5/5. Its function is as follows. The beta subunit is responsible for the synthesis of L-tryptophan from indole and L-serine. In Azobacteroides pseudotrichonymphae genomovar. CFP2, this protein is Tryptophan synthase beta chain.